The chain runs to 853 residues: DNA mismatch repair protein MutS (853 aa).

Residue 614–621 (GPNMGGKS) participates in ATP binding.

Belongs to the DNA mismatch repair MutS family.

Its function is as follows. This protein is involved in the repair of mismatches in DNA. It is possible that it carries out the mismatch recognition step. This protein has a weak ATPase activity. This Enterobacter sp. (strain 638) protein is DNA mismatch repair protein MutS.